The primary structure comprises 238 residues: COMM domain-containing protein 10 homolog Vlet (238 aa).

Residues 43-77 (ASASATSSTVGTSVTTTGRVDSSTEENPTSNTEPE) show a composition bias toward low complexity. Residues 43-78 (ASASATSSTVGTSVTTTGRVDSSTEENPTSNTEPEY) are disordered. The 65-residue stretch at 161–225 (VIEDVAWKLN…SIQGELDAML (65 aa)) folds into the COMM domain.

It belongs to the COMM domain-containing protein 10 family. Component of the commander complex consisting of the CCC subcomplex and the retriever subcomplex. Component of the CCC subcomplex. Interacts with Smn; along with Sbat and Hez may form an accessory subcomplex involved in SMN complex function.

Its function is as follows. Scaffold protein in the commander complex that is essential for endosomal recycling of transmembrane cargos; the commander complex is composed of the CCC subcomplex and the retriever subcomplex. May modulate activity of cullin-RING E3 ubiquitin ligase (CRL) complexes. May down-regulate activation of NF-kappa-B. May have an accessory function in the survival motor neuron (SMN) complex. Required for neuromuscular function and organismal viability. This is COMM domain-containing protein 10 homolog Vlet from Drosophila melanogaster (Fruit fly).